Here is a 123-residue protein sequence, read N- to C-terminus: MELARPCSNFQSDLDFCPDCGSVLPLPGVQDTVICPRCGFSIDVRDFGGKVVKTSVVFNKLGTVIPMSVDEGPESQGPVVDRRCSRCGHEGMAYYTRQMRSADEGQTVFYTCINCKFQEKEDS.

C17, C20, C35, C38, C84, and C87 together coordinate Zn(2+). A C4-type zinc finger spans residues C17–C38. A TFIIS-type zinc finger spans residues V80–K120. Residues D103–E104 carry the Hairpin motif. Zn(2+) contacts are provided by C112 and C115.

The protein belongs to the archaeal RpoM/eukaryotic RPA12/RPB9/RPC11 RNA polymerase family. Component of the RNA polymerase I (Pol I) complex consisting of 13 subunits: a ten-subunit catalytic core composed of POLR1A/RPA1, POLR1B/RPA2, POLR1C/RPAC1, POLR1D/RPAC2, POLR1H/RPA12, POLR2E/RPABC1, POLR2F/RPABC2, POLR2H/RPABC3, POLR2K/RPABC4 and POLR2L/RPABC5; a mobile stalk subunit POLR1F/RPA43 protruding from the core and additional subunits homologous to general transcription factors POLR1E/RPA49 and POLR1G/RPA34. Part of Pol I pre-initiation complex (PIC), in which Pol I core assembles with RRN3 and promoter-bound UTBF and SL1/TIF-IB complex.

The protein localises to the nucleus. The protein resides in the nucleolus. Core component of RNA polymerase I (Pol I), a DNA-dependent RNA polymerase which synthesizes ribosomal RNA precursors using the four ribonucleoside triphosphates as substrates. Can mediate Pol I proofreading of the nascent RNA transcript. Anchors into the Pol I active site to monitor transcription fidelity and cleave mis-incorporated 5'-ribonucleotides. The chain is DNA-directed RNA polymerase I subunit RPA12 from Rattus norvegicus (Rat).